Here is a 417-residue protein sequence, read N- to C-terminus: Serine hydroxymethyltransferase (417 aa).

Residues Leu116 and 120–122 (GHL) each bind (6S)-5,6,7,8-tetrahydrofolate. Residue Lys225 is modified to N6-(pyridoxal phosphate)lysine. A (6S)-5,6,7,8-tetrahydrofolate-binding site is contributed by 350–352 (SPF).

It belongs to the SHMT family. In terms of assembly, homodimer. Pyridoxal 5'-phosphate serves as cofactor.

The protein resides in the cytoplasm. It carries out the reaction (6R)-5,10-methylene-5,6,7,8-tetrahydrofolate + glycine + H2O = (6S)-5,6,7,8-tetrahydrofolate + L-serine. It functions in the pathway one-carbon metabolism; tetrahydrofolate interconversion. It participates in amino-acid biosynthesis; glycine biosynthesis; glycine from L-serine: step 1/1. Its function is as follows. Catalyzes the reversible interconversion of serine and glycine with tetrahydrofolate (THF) serving as the one-carbon carrier. This reaction serves as the major source of one-carbon groups required for the biosynthesis of purines, thymidylate, methionine, and other important biomolecules. Also exhibits THF-independent aldolase activity toward beta-hydroxyamino acids, producing glycine and aldehydes, via a retro-aldol mechanism. This chain is Serine hydroxymethyltransferase, found in Ligilactobacillus salivarius (strain UCC118) (Lactobacillus salivarius).